Consider the following 850-residue polypeptide: MALPIEGKLSMANNRIERLKSPSSSSTCSMDEVLITSSNNSSSICLETMRQLPREGVSGQINIIKETAASSSSHAALFIKQDLYEHIDPLPAYPPSYDLVNPNKEVRFPIFGDTAPCPKSSLPPLYAPAVYELTLISLKLERLSPYEISSNRSWRNFIIEINSTQLNFYHIDESLTKHIRNYSSGETKSEKEDRIHSDLVHRSDQSQHLHHRLFTLPTRSASEFKKADQERISYRVKRDRSRYLTDEALYKSFTLQNARFGIPTDYTKKSFVLRMSCESEQFLLRFSHIDDMIDWSMYLSIGISVSLDLEVREYPDYRIVPRRRRRRRRRRRRRRHTHRSESSMGSFSQRFIRSNSRPDLIQRYSTGSSTNNNTTIRERSNTFTAGLLDHYCTGLSKTPTEALISSAASGESSDNSTLGSTRSLSGCSASRSIASRSLKFKIKNFFRPKNSSRTEKLHRLRSNSSNLNSVIETEEDDEHHESSGGDHPEPGVPVNTTIKVERPMHRNRAISMPQRQSLRRAISEEVVPIKFPNSTVGESVHSPSPIEHLSVDGCEIMLQSQNAVMKEELRSVASNLVANERDEASIRPKPQSSSIYLSGLAPNGESATDLSQSSRSLCLTNRDAEINDDESATETDEDENDGETDEYAGDDTNDDTDDSNIGYAYGSESDYSCLIEERIRNRRRASSTLSCFSNIPYGTDDIKWKPAIKEISRRRYLRDSLKCIKPFLDSNDCLGKVIYIPVSGPTFETSNKIHFSNRQSLQKQKNHFLKGFIVGPTALIELNCKNKNAIVGTTKDAEDHGEDDGDGDDGEDDDDDDDDDDDDDDDEDDDDDDDDDDDDDDDDDDGQITA.

The region spanning arginine 194–serine 306 is the PH domain. Positions arginine 324–histidine 338 are enriched in basic residues. 5 disordered regions span residues arginine 324–serine 348, serine 406–serine 428, serine 451–valine 494, glutamate 583–serine 659, and threonine 793–alanine 850. Low complexity predominate over residues serine 406–serine 416. A compositionally biased stretch (polar residues) spans threonine 417 to serine 428. The span at histidine 479–glutamate 489 shows a compositional bias: basic and acidic residues. The segment covering glutamate 605–leucine 619 has biased composition (polar residues). Acidic residues-rich tracts occupy residues isoleucine 626 to aspartate 658 and aspartate 799 to alanine 850.

Its subcellular location is the cytoplasm. The polypeptide is PH domain-containing protein YHR131C (Saccharomyces cerevisiae (strain ATCC 204508 / S288c) (Baker's yeast)).